The sequence spans 189 residues: Interferon alpha-F (189 aa).

Positions 1–23 are cleaved as a signal peptide; it reads MAPAWSLLLALLLLSCNAICSLG. Intrachain disulfides connect C24–C122 and C52–C162.

Belongs to the alpha/beta interferon family.

Its subcellular location is the secreted. Its function is as follows. Produced by macrophages, IFN-alpha have antiviral activities. Interferon stimulates the production of two enzymes: a protein kinase and an oligoadenylate synthetase. This Bos taurus (Bovine) protein is Interferon alpha-F (IFNAF).